The following is a 294-amino-acid chain: Nucleoside-specific channel-forming protein Tsx (294 aa).

The first 22 residues, 1 to 22 (MKKTLLAAGAVVALSTTFAAGA), serve as a signal peptide directing secretion.

It belongs to the nucleoside-specific channel-forming outer membrane porin (Tsx) (TC 1.B.10) family.

It is found in the cell outer membrane. Functionally, functions as a substrate-specific channel for nucleosides and deoxynucleosides. Also functions in albicidin uptake and as receptor for colicin K. Also is a receptor for several Tsx-specific bacteriophages. In Klebsiella pneumoniae, this protein is Nucleoside-specific channel-forming protein Tsx.